A 137-amino-acid polypeptide reads, in one-letter code: Large ribosomal subunit protein uL16 (137 aa).

This sequence belongs to the universal ribosomal protein uL16 family. As to quaternary structure, part of the 50S ribosomal subunit.

Functionally, binds 23S rRNA and is also seen to make contacts with the A and possibly P site tRNAs. The chain is Large ribosomal subunit protein uL16 from Ruegeria sp. (strain TM1040) (Silicibacter sp.).